A 638-amino-acid chain; its full sequence is Probable potassium transport system protein Kup (638 aa).

The next 12 helical transmembrane spans lie at 25-45 (LAIA…LYSL), 65-85 (VISL…LLFV), 114-134 (AGAL…DAVI), 152-172 (PHLS…LFWI), 184-204 (FGPI…YHIV), 226-246 (LLQA…AEAL), 262-282 (AYGL…ALLI), 291-311 (PFFL…STVA), 352-372 (IYVP…VIGF), 382-402 (YGIA…VVMV), 410-430 (LLVG…FGAN), and 434-454 (VAQG…LLMT).

The protein belongs to the HAK/KUP transporter (TC 2.A.72) family.

It is found in the cell inner membrane. It carries out the reaction K(+)(in) + H(+)(in) = K(+)(out) + H(+)(out). In terms of biological role, transport of potassium into the cell. Likely operates as a K(+):H(+) symporter. This Burkholderia lata (strain ATCC 17760 / DSM 23089 / LMG 22485 / NCIMB 9086 / R18194 / 383) protein is Probable potassium transport system protein Kup.